A 1369-amino-acid chain; its full sequence is Rho-associated protein kinase 1 (1369 aa).

At Ser-2 the chain carries N-acetylserine. One can recognise a Protein kinase domain in the interval 76–338 (YEVVKVIGRG…VEEIKRHLFF (263 aa)). ATP is bound by residues 82-90 (IGRGAFGEV) and Lys-105. Asp-198 (proton acceptor) is an active-site residue. The AGC-kinase C-terminal domain occupies 341–409 (DQWAWETLRD…YSNRRYLPSA (69 aa)). The interval 368-727 (FDDLEEDKGD…KKLKEEREAR (360 aa)) is interaction with FHOD1. Residues 422–692 (KNVQESLQKT…RLEQEVNEHK (271 aa)) are a coiled coil. One can recognise an REM-1 domain in the interval 479 to 556 (SAVSQIEKEK…LEEANDLLRT (78 aa)). The tract at residues 707–946 (EAKSVAMCEM…TVSRLEEANN (240 aa)) is SHROOM3 binding. In terms of domain architecture, RhoBD spans 949–1015 (TKDIELLRKE…LAEIMNRKDF (67 aa)). Residues 998–1010 (LKTQAVNKLAEIM) form an RHOA binding region. A coiled-coil region spans residues 1011 to 1102 (NRKDFKIDRK…KLLDLSDSTS (92 aa)). Phosphoserine is present on residues Ser-1105 and Ser-1108. The auto-inhibitory stretch occupies residues 1115-1369 (NLPVGSACIP…VVKNTSGKTS (255 aa)). Residues 1133 to 1332 (SSRIEGWLSV…WVTHLVKKIP (200 aa)) form the PH domain. The Phorbol-ester/DAG-type zinc finger occupies 1243 to 1298 (GHEFIPTLYHFPANCEACAKPLWHVFKPPPALECRRCHVKSHRDHLDKKEDLIPPC). A Phosphoserine modification is found at Ser-1343.

The protein belongs to the protein kinase superfamily. AGC Ser/Thr protein kinase family. Homodimer. Interacts with GEM, MYLC2B, RHOE, LIMK1, LIMK2, TSG101, CHORDC1, DAPK3, PFN1, PTEN and JIP3. Interacts with FHOD1 in a Src-dependent manner. Interacts with ITGB1BP1 (via N-terminus and PTB domain). Interacts with RHOA (activated by GTP), RHOB, RHOC and PPP1R12A. Interacts with SHROOM3. It depends on Mg(2+) as a cofactor. Autophosphorylated on serine and threonine residues. Post-translationally, cleaved by caspase-3 during apoptosis. This leads to constitutive activation of the kinase and membrane blebbing. In terms of tissue distribution, highly expressed in brain, spleen, lung, liver, skeletal muscle, kidney and testis.

It localises to the cytoplasm. It is found in the cytoskeleton. Its subcellular location is the microtubule organizing center. The protein localises to the centrosome. The protein resides in the centriole. It localises to the golgi apparatus membrane. It is found in the cell projection. Its subcellular location is the bleb. The protein localises to the cell membrane. The protein resides in the lamellipodium. It localises to the ruffle. The enzyme catalyses L-seryl-[protein] + ATP = O-phospho-L-seryl-[protein] + ADP + H(+). The catalysed reaction is L-threonyl-[protein] + ATP = O-phospho-L-threonyl-[protein] + ADP + H(+). With respect to regulation, activated by RHOA binding. Inhibited by Y-27632. Functionally, protein kinase which is a key regulator of the actin cytoskeleton and cell polarity. Involved in regulation of smooth muscle contraction, actin cytoskeleton organization, stress fiber and focal adhesion formation, neurite retraction, cell adhesion and motility via phosphorylation of DAPK3, GFAP, LIMK1, LIMK2, MYL9/MLC2, TPPP, PFN1 and PPP1R12A. Phosphorylates FHOD1 and acts synergistically with it to promote SRC-dependent non-apoptotic plasma membrane blebbing. Phosphorylates JIP3 and regulates the recruitment of JNK to JIP3 upon UVB-induced stress. Acts as a suppressor of inflammatory cell migration by regulating PTEN phosphorylation and stability. Acts as a negative regulator of VEGF-induced angiogenic endothelial cell activation. Required for centrosome positioning and centrosome-dependent exit from mitosis. Plays a role in terminal erythroid differentiation. Inhibits podocyte motility via regulation of actin cytoskeletal dynamics and phosphorylation of CFL1. Promotes keratinocyte terminal differentiation. Involved in osteoblast compaction through the fibronectin fibrillogenesis cell-mediated matrix assembly process, essential for osteoblast mineralization. May regulate closure of the eyelids and ventral body wall by inducing the assembly of actomyosin bundles. The polypeptide is Rho-associated protein kinase 1 (Rock1) (Rattus norvegicus (Rat)).